The chain runs to 197 residues: Guanylyl cyclase-activating protein 2 (197 aa).

Residue Gly-2 is the site of N-myristoyl glycine attachment. 4 EF-hand domains span residues 15–50 (DVAE…QDNQ), 51–86 (EAAD…VLRG), 87–122 (KLEH…IYNL), and 138–173 (SPEQ…DKWV). Residues Asp-64, Asn-66, Asp-68, Thr-70, Glu-75, Asp-100, Asp-102, Asn-104, Cys-106, Glu-111, Asp-151, Asn-153, Asp-155, Gln-157, and Glu-162 each contribute to the Ca(2+) site.

In terms of tissue distribution, low expression in retina.

Functionally, stimulates guanylyl cyclase 1 (GC1) and GC2 when free calcium ions concentration is low and inhibits guanylyl cyclases when free calcium ions concentration is elevated. This Ca(2+)-sensitive regulation of guanylyl cyclase (GC) is a key event in recovery of the dark state of rod photoreceptors following light exposure. The protein is Guanylyl cyclase-activating protein 2 (GUCA1B) of Lithobates pipiens (Northern leopard frog).